Reading from the N-terminus, the 28-residue chain is Turritoxin F21-2 (28 aa).

Expressed by the venom duct.

It is found in the secreted. Functionally, potent inhibitor of human alpha-3-beta-2 nAChRs (IC(50)=566.2 nM). Irreversibly inhibits the acetylcholine-induced response on human alpha-7/CHRNA7 (55% inhibition at 5.6 uM) and alpha-3-beta-2/CHRNA3-CHRNB2 (91% inhibition) nAChRs. The polypeptide is Turritoxin F21-2 (Polystira nobilis (Sea snail)).